Consider the following 212-residue polypeptide: Pyridoxine/pyridoxamine 5'-phosphate oxidase (212 aa).

Residues 7 to 10 (RAKY) and Lys65 contribute to the substrate site. FMN contacts are provided by residues 60 to 65 (RTVLLK), 75 to 76 (FT), Lys82, and Gln104. Substrate is bound by residues Tyr122, Arg126, and Ser130. Residues 139-140 (QS) and Trp184 each bind FMN. 190–192 (RLH) serves as a coordination point for substrate. Arg194 contacts FMN.

It belongs to the pyridoxamine 5'-phosphate oxidase family. As to quaternary structure, homodimer. FMN serves as cofactor.

The enzyme catalyses pyridoxamine 5'-phosphate + O2 + H2O = pyridoxal 5'-phosphate + H2O2 + NH4(+). It catalyses the reaction pyridoxine 5'-phosphate + O2 = pyridoxal 5'-phosphate + H2O2. Its pathway is cofactor metabolism; pyridoxal 5'-phosphate salvage; pyridoxal 5'-phosphate from pyridoxamine 5'-phosphate: step 1/1. It participates in cofactor metabolism; pyridoxal 5'-phosphate salvage; pyridoxal 5'-phosphate from pyridoxine 5'-phosphate: step 1/1. In terms of biological role, catalyzes the oxidation of either pyridoxine 5'-phosphate (PNP) or pyridoxamine 5'-phosphate (PMP) into pyridoxal 5'-phosphate (PLP). In Aliarcobacter butzleri (strain RM4018) (Arcobacter butzleri), this protein is Pyridoxine/pyridoxamine 5'-phosphate oxidase.